The following is a 337-amino-acid chain: Protein-arginine kinase (337 aa).

One can recognise a Phosphagen kinase C-terminal domain in the interval 12 to 240; it reads IVIASKVKIL…NKLILREKNQ (229 aa). ATP-binding positions include 15–19, 162–166, and 193–198; these read ASKVK, RAKVF, and KSIYNS.

It belongs to the ATP:guanido phosphotransferase family.

It carries out the reaction L-arginyl-[protein] + ATP = N(omega)-phospho-L-arginyl-[protein] + ADP + H(+). Its function is as follows. Catalyzes the specific phosphorylation of arginine residues in proteins. The protein is Protein-arginine kinase of Clostridium perfringens (strain ATCC 13124 / DSM 756 / JCM 1290 / NCIMB 6125 / NCTC 8237 / Type A).